Here is a 704-residue protein sequence, read N- to C-terminus: Phytyl ester synthase 1, chloroplastic (704 aa).

The transit peptide at 1–27 (MATCSSSLLVLPNLRLSSNQRRNFKVR) directs the protein to the chloroplast.

The protein belongs to the diacylglycerol acyltransferase family. As to quaternary structure, interacts with PGM48. As to expression, mostly expressed in flowers (e.g. sepals, petals and stamen).

The protein resides in the plastid. It localises to the chloroplast. It is found in the plastoglobule. The enzyme catalyses a 1,2-diacyl-3-O-(beta-D-galactosyl)-sn-glycerol + a 1,2-diacylglycerol = an acyl-3-O-(beta-D-galactosyl)-sn-glycerol + a triacylglycerol. It catalyses the reaction a 1,2-diacylglycerol + a fatty acyl-CoA = a triacylglycerol + CoA. It carries out the reaction a fatty acyl-[ACP] + a 1,2-diacylglycerol = a triacylglycerol + holo-[ACP]. The catalysed reaction is phytol + a fatty acyl-CoA = a fatty acid phytyl ester + CoA. The enzyme catalyses phytol + tetradecanoyl-CoA = tetradecanoate phytyl ester + CoA. It catalyses the reaction a 1,3-diacylglycerol + a fatty acyl-CoA = a triacylglycerol + CoA. It carries out the reaction 1,2-dihexanoylglycerol + tetradecanoyl-CoA = 1,2-dihexanoyl-3-tetradecanoylglycerol + CoA. The catalysed reaction is 1,2-dihexanoylglycerol + hexadecanoyl-CoA = 1,2-dihexanoyl-3-hexadecanoylglycerol + CoA. The enzyme catalyses 1,2-dihexanoylglycerol + octadecanoyl-CoA = 1,2-dihexanoyl-3-octadecanoylglycerol + CoA. It catalyses the reaction (7Z,10Z,13Z)-hexadecatrienoyl-CoA + 1,2-dihexanoylglycerol = 1,2-dihexanoyl-3-(7Z,10Z,13Z-hexadecatrienoyl)-glycerol + CoA. It carries out the reaction 1,2-dihexanoylglycerol + (9Z)-octadecenoyl-CoA = 1,2-dihexanoyl-3-(9Z-octadecenoyl)-glycerol + CoA. The catalysed reaction is 1,2-dihexanoylglycerol + (9Z,12Z,15Z)-octadecatrienoyl-CoA = 1,2-dihexanoyl-3-(9Z,12Z,15Z-octadecatrienoyl)-glycerol + CoA. The enzyme catalyses phytol + decanoyl-CoA = decanoate phytyl ester + CoA. It catalyses the reaction (7Z,10Z,13Z)-hexadecatrienoyl-CoA + phytol = (7Z,10Z,13Z)-hexadecatrienoate phytyl ester + CoA. It carries out the reaction phytol + dodecanoyl-CoA = dodecanoate phytyl ester + CoA. Acyltransferase involved in fatty acid phytyl ester synthesis in chloroplasts, a process required for the maintenance of the photosynthetic membrane integrity during abiotic stress and senescence. Exhibits phytyl ester synthesis and diacylglycerol acyltransferase activities with broad substrate specificities, and can employ acyl-CoAs, acyl carrier proteins, and galactolipids as acyl donors. The protein is Phytyl ester synthase 1, chloroplastic of Arabidopsis thaliana (Mouse-ear cress).